Consider the following 208-residue polypeptide: Small ribosomal subunit protein uS4 (208 aa).

One can recognise an S4 RNA-binding domain in the interval 98-160 (QRLDNVVYRM…SKNNSQIVRA (63 aa)).

Belongs to the universal ribosomal protein uS4 family. In terms of assembly, part of the 30S ribosomal subunit. Contacts protein S5. The interaction surface between S4 and S5 is involved in control of translational fidelity.

Its function is as follows. One of the primary rRNA binding proteins, it binds directly to 16S rRNA where it nucleates assembly of the body of the 30S subunit. Functionally, with S5 and S12 plays an important role in translational accuracy. In Sulfurimonas denitrificans (strain ATCC 33889 / DSM 1251) (Thiomicrospira denitrificans (strain ATCC 33889 / DSM 1251)), this protein is Small ribosomal subunit protein uS4.